The sequence spans 1562 residues: Cell surface antigen I/II (1562 aa).

Residues 1-38 form the signal peptide; it reads MKVKKTYGFRKSKISKTLCGAVLGTVAAVSVAGQKVFA. Low complexity predominate over residues 42-54; it reads TTTSDVDTKVVGT. The tract at residues 42–91 is disordered; sequence TTTSDVDTKVVGTQTGNPATNLPEAQGSASKEAEQSQNQAGETNGSIPVE. The interval 60–551 is helical; that stretch reads ATNLPEAQGS…SKAKYDQKIL (492 aa). Positions 76–87 are enriched in polar residues; sequence QSQNQAGETNGS. Ag I/II A repeat units lie at residues 147–221, 222–303, 304–385, and 386–467; these read KKTT…QKTN, AANQ…QEAN, AANE…KKAN, and AANE…QKDL. Disordered stretches follow at residues 824 to 973 and 1482 to 1509; these read VPKV…PTDP and SNTVKTTTPEDPTDPTDPQDPSSPRTST. Pro residues predominate over residues 943–958; sequence PTPPTPTPDQPEPNKP. Residues 1500–1509 are compositionally biased toward low complexity; sequence QDPSSPRTST. The LPXTG sorting signal signature appears at 1529–1533; it reads LPNTG. Position 1532 is a pentaglycyl murein peptidoglycan amidated threonine (T1532). Residues 1533–1562 constitute a propeptide, removed by sortase; that stretch reads GVTNNAYMPLLGIIGLVTSFSLLGLKAKKD.

This sequence belongs to the antigen I/II family. In terms of processing, detected as a 185 kDa cell surface protein, but also as 2 proteins in S.mutans culture supernatants of about 150 kDa (antigen I) and 50 kDa (antigen II); antigen II is only seen after proteolysis. Antigen I and II have the same N-terminus but different C-termini.

It is found in the secreted. The protein localises to the cell wall. Functionally, surface protein antigen implicated in dental caries. In Streptococcus mutans serotype c (strain ATCC 700610 / UA159), this protein is Cell surface antigen I/II.